Here is a 334-residue protein sequence, read N- to C-terminus: Ketol-acid reductoisomerase (NADP(+)) (334 aa).

Positions 2–182 constitute a KARI N-terminal Rossmann domain; the sequence is PKMYYEKDTD…GGARAGVLET (181 aa). Residues 25 to 28, S51, S53, and 83 to 86 contribute to the NADP(+) site; these read YGSQ and DEKQ. The active site involves H108. NADP(+) is bound at residue G134. The 146-residue stretch at 183–328 folds into the KARI C-terminal knotted domain; that stretch reads TFKDETETDL…KELRGMMSWI (146 aa). 4 residues coordinate Mg(2+): D191, E195, E227, and E231. S252 is a binding site for substrate.

This sequence belongs to the ketol-acid reductoisomerase family. The cofactor is Mg(2+).

It catalyses the reaction (2R)-2,3-dihydroxy-3-methylbutanoate + NADP(+) = (2S)-2-acetolactate + NADPH + H(+). The catalysed reaction is (2R,3R)-2,3-dihydroxy-3-methylpentanoate + NADP(+) = (S)-2-ethyl-2-hydroxy-3-oxobutanoate + NADPH + H(+). It participates in amino-acid biosynthesis; L-isoleucine biosynthesis; L-isoleucine from 2-oxobutanoate: step 2/4. It functions in the pathway amino-acid biosynthesis; L-valine biosynthesis; L-valine from pyruvate: step 2/4. Involved in the biosynthesis of branched-chain amino acids (BCAA). Catalyzes an alkyl-migration followed by a ketol-acid reduction of (S)-2-acetolactate (S2AL) to yield (R)-2,3-dihydroxy-isovalerate. In the isomerase reaction, S2AL is rearranged via a Mg-dependent methyl migration to produce 3-hydroxy-3-methyl-2-ketobutyrate (HMKB). In the reductase reaction, this 2-ketoacid undergoes a metal-dependent reduction by NADPH to yield (R)-2,3-dihydroxy-isovalerate. The sequence is that of Ketol-acid reductoisomerase (NADP(+)) from Clostridium beijerinckii (strain ATCC 51743 / NCIMB 8052) (Clostridium acetobutylicum).